Here is a 184-residue protein sequence, read N- to C-terminus: MGFLKILRKQRAREREMRILILGLDNAGKTTLMKKFLDEPTDTIEPTLGFDIKTVHFKDFQLNLWDVGGQKSLRSYWKNYFESTDALIWVVDSSDRERLLQCSEELKKLLGEERLAGASLLVLANKSDLPGAIDVNSIAQVLDLHSIKSHHWKIFSCCALSGDRLVQAMTWLCDDVGSRLFILD.

The N-myristoyl glycine moiety is linked to residue Gly2. GTP contacts are provided by residues 23–30 (GLDNAGKT), 66–70 (DVGGQ), Gly68, and 125–128 (NKSD).

The protein belongs to the small GTPase superfamily. Arf family. In the embryo, strongly expressed in migrating hypodermal cells. Shortly before the beginning of elongation, expressed in many developing neurons where it persists throughout adulthood. In the larva, highly expressed in migrating hypodermal cells and the uterus. Also expressed in vulva, spermatheca, sheath cells, distal tips cells and proctoderm of the male tail.

It localises to the cytoplasm. The protein resides in the cell membrane. Its subcellular location is the cytoskeleton. The protein localises to the microtubule organizing center. It is found in the centrosome. In terms of biological role, GTP-binding protein that functions in embryogenesis, cytokinesis, germline development and microtubulule cytoskeleton dynamics. In Caenorhabditis elegans, this protein is ADP-ribosylation factor-like protein 2 (evl-20).